Here is a 245-residue protein sequence, read N- to C-terminus: Ribonuclease PH (245 aa).

Residues Arg-86 and 124–126 contribute to the phosphate site; that span reads GTR.

It belongs to the RNase PH family. In terms of assembly, homohexameric ring arranged as a trimer of dimers.

The enzyme catalyses tRNA(n+1) + phosphate = tRNA(n) + a ribonucleoside 5'-diphosphate. In terms of biological role, phosphorolytic 3'-5' exoribonuclease that plays an important role in tRNA 3'-end maturation. Removes nucleotide residues following the 3'-CCA terminus of tRNAs; can also add nucleotides to the ends of RNA molecules by using nucleoside diphosphates as substrates, but this may not be physiologically important. Probably plays a role in initiation of 16S rRNA degradation (leading to ribosome degradation) during starvation. This Bacillus cereus (strain G9842) protein is Ribonuclease PH.